Reading from the N-terminus, the 156-residue chain is Ribosomal RNA large subunit methyltransferase H (156 aa).

Residues Leu-73, Gly-104, and 123 to 128 each bind S-adenosyl-L-methionine; that span reads IGPLTL.

This sequence belongs to the RNA methyltransferase RlmH family. In terms of assembly, homodimer.

The protein resides in the cytoplasm. The enzyme catalyses pseudouridine(1915) in 23S rRNA + S-adenosyl-L-methionine = N(3)-methylpseudouridine(1915) in 23S rRNA + S-adenosyl-L-homocysteine + H(+). Specifically methylates the pseudouridine at position 1915 (m3Psi1915) in 23S rRNA. In Xanthomonas axonopodis pv. citri (strain 306), this protein is Ribosomal RNA large subunit methyltransferase H.